The following is a 174-amino-acid chain: Shikimate kinase 2 (174 aa).

Position 12-17 (12-17 (GAGKTT)) interacts with ATP. Residues Thr16 and Asp32 each coordinate Mg(2+). Substrate-binding residues include Asp34, Arg58, and Gly79. An LID domain region spans residues 112–126 (AEDPEEAQRPSLTGK). Arg120 lines the ATP pocket. Residue Arg139 participates in substrate binding. Residue Gln155 participates in ATP binding.

This sequence belongs to the shikimate kinase family. AroL subfamily. As to quaternary structure, monomer. Requires Mg(2+) as cofactor.

The protein localises to the cytoplasm. The catalysed reaction is shikimate + ATP = 3-phosphoshikimate + ADP + H(+). Its pathway is metabolic intermediate biosynthesis; chorismate biosynthesis; chorismate from D-erythrose 4-phosphate and phosphoenolpyruvate: step 5/7. In terms of biological role, catalyzes the specific phosphorylation of the 3-hydroxyl group of shikimic acid using ATP as a cosubstrate. The polypeptide is Shikimate kinase 2 (Yersinia pestis bv. Antiqua (strain Antiqua)).